The following is a 192-amino-acid chain: Peptidyl-tRNA hydrolase (192 aa).

Histidine 17 serves as a coordination point for tRNA. The active-site Proton acceptor is histidine 22. Phenylalanine 68, asparagine 70, and asparagine 116 together coordinate tRNA.

This sequence belongs to the PTH family. In terms of assembly, monomer.

It localises to the cytoplasm. The enzyme catalyses an N-acyl-L-alpha-aminoacyl-tRNA + H2O = an N-acyl-L-amino acid + a tRNA + H(+). Hydrolyzes ribosome-free peptidyl-tRNAs (with 1 or more amino acids incorporated), which drop off the ribosome during protein synthesis, or as a result of ribosome stalling. Its function is as follows. Catalyzes the release of premature peptidyl moieties from peptidyl-tRNA molecules trapped in stalled 50S ribosomal subunits, and thus maintains levels of free tRNAs and 50S ribosomes. The sequence is that of Peptidyl-tRNA hydrolase from Stenotrophomonas maltophilia (strain K279a).